The primary structure comprises 158 residues: uncharacterized protein (158 aa).

Residues 12–73 (LDEIDRAILR…LINPFKAGYE (62 aa)) form the HTH asnC-type domain. The segment at residues 31 to 50 (YSEISRRINVPESTVRARVN) is a DNA-binding region (H-T-H motif).

This is an uncharacterized protein from Pyrococcus abyssi (strain GE5 / Orsay).